Consider the following 192-residue polypeptide: Holliday junction branch migration complex subunit RuvA (192 aa).

The tract at residues 1–61 (MFEYLKGIVA…DTGITLYGFL (61 aa)) is domain I. The domain II stretch occupies residues 62-137 (SLEDKELFLK…KLGDYVKKSA (76 aa)). The flexible linker stretch occupies residues 137 to 140 (AVAT). Positions 141 to 192 (DLTPSLQDALLALVALGYTQKEVDRITPKLAKLPENTADGYIKEALALLLKK) are domain III.

The protein belongs to the RuvA family. As to quaternary structure, homotetramer. Forms an RuvA(8)-RuvB(12)-Holliday junction (HJ) complex. HJ DNA is sandwiched between 2 RuvA tetramers; dsDNA enters through RuvA and exits via RuvB. An RuvB hexamer assembles on each DNA strand where it exits the tetramer. Each RuvB hexamer is contacted by two RuvA subunits (via domain III) on 2 adjacent RuvB subunits; this complex drives branch migration. In the full resolvosome a probable DNA-RuvA(4)-RuvB(12)-RuvC(2) complex forms which resolves the HJ.

The protein localises to the cytoplasm. In terms of biological role, the RuvA-RuvB-RuvC complex processes Holliday junction (HJ) DNA during genetic recombination and DNA repair, while the RuvA-RuvB complex plays an important role in the rescue of blocked DNA replication forks via replication fork reversal (RFR). RuvA specifically binds to HJ cruciform DNA, conferring on it an open structure. The RuvB hexamer acts as an ATP-dependent pump, pulling dsDNA into and through the RuvAB complex. HJ branch migration allows RuvC to scan DNA until it finds its consensus sequence, where it cleaves and resolves the cruciform DNA. This Lactobacillus gasseri (strain ATCC 33323 / DSM 20243 / BCRC 14619 / CIP 102991 / JCM 1131 / KCTC 3163 / NCIMB 11718 / NCTC 13722 / AM63) protein is Holliday junction branch migration complex subunit RuvA.